The chain runs to 268 residues: uncharacterized protein (268 aa).

The protein belongs to the LarE family.

This is an uncharacterized protein from Synechocystis sp. (strain ATCC 27184 / PCC 6803 / Kazusa).